The primary structure comprises 220 residues: UPF0502 protein Pnap_3223 (220 aa).

It belongs to the UPF0502 family.

This is UPF0502 protein Pnap_3223 from Polaromonas naphthalenivorans (strain CJ2).